The chain runs to 557 residues: Protein Red (557 aa).

The disordered stretch occupies residues 1-90 (MPERDSEPFS…YAKLRQQEIE (90 aa)). A compositionally biased stretch (basic and acidic residues) spans 16 to 25 (DGHDVDDPHS). Positions 42 to 53 (TPRAAPTSAPPS) are enriched in low complexity. Residues K98 and K137 each carry the N6-acetyllysine modification. K151 is covalently cross-linked (Glycyl lysine isopeptide (Lys-Gly) (interchain with G-Cter in SUMO2)). The tract at residues 181-205 (KEKEEEELMEKPQKETKKDEDPENK) is disordered. The residue at position 287 (S287) is a Phosphoserine. Positions 294–303 (RNKKLKKKDK) are enriched in basic residues. The disordered stretch occupies residues 294 to 402 (RNKKLKKKDK…PMDVDKGPGS (109 aa)). The span at 304–313 (GKLEEKKPPE) shows a compositional bias: basic and acidic residues. Residues K310 and K331 each participate in a glycyl lysine isopeptide (Lys-Gly) (interchain with G-Cter in SUMO2) cross-link. Residues 332 to 398 (TPRDKERERY…VDDEPMDVDK (67 aa)) show a composition bias toward basic and acidic residues. 17 consecutive repeat copies span residues 342 to 343 (RE), 344 to 345 (RE), 346 to 347 (RD), 348 to 349 (RE), 350 to 351 (RD), 352 to 353 (RD), 354 to 355 (RE), 356 to 357 (RD), 358 to 359 (RE), 360 to 361 (RD), 362 to 363 (RE), 364 to 365 (RE), 366 to 367 (RE), 368 to 369 (RD), 370 to 371 (RE), 372 to 373 (RE), and 374 to 375 (RE). The interval 342-375 (RERERDRERDRDRERDRERDRERERERDRERERE) is 17 X 2 AA tandem repeats of R-[ED]. Residues K386, K388, K404, and K408 each participate in a glycyl lysine isopeptide (Lys-Gly) (interchain with G-Cter in SUMO2) cross-link. Residues S417 and S460 each carry the phosphoserine modification. T485 is modified (phosphothreonine). Glycyl lysine isopeptide (Lys-Gly) (interchain with G-Cter in SUMO2) cross-links involve residues K496, K501, and K509. S536 bears the Phosphoserine mark. Residues K541, K543, K544, and K553 each participate in a glycyl lysine isopeptide (Lys-Gly) (interchain with G-Cter in SUMO2) cross-link.

This sequence belongs to the RED family. In terms of assembly, component of the spliceosome B complex. Interacts with SMU1. Interacts with MAD1L1. May interact with DHX15.

It localises to the nucleus. Its subcellular location is the nucleoplasm. The protein localises to the chromosome. The protein resides in the cytoplasm. It is found in the cytoskeleton. It localises to the spindle pole. Involved in pre-mRNA splicing as a component of the spliceosome. Auxiliary spliceosomal protein that regulates selection of alternative splice sites in a small set of target pre-mRNA species. Required for normal mitotic cell cycle progression. Recruits MAD1L1 and MAD2L1 to kinetochores, and is required to trigger the spindle assembly checkpoint. Required for normal accumulation of SMU1. The polypeptide is Protein Red (Ik) (Rattus norvegicus (Rat)).